A 477-amino-acid chain; its full sequence is (R)-2-hydroxyglutaryl-CoA dehydratase, subunit alpha (477 aa).

The protein belongs to the FldB/FldC dehydratase alpha/beta subunit family. In terms of assembly, the (R)-2-hydroxyglutaryl-CoA dehydratase enzyme system is a heterodimer composed of an alpha subunit (HgdA) and a beta subunit (HgdB). It depends on [4Fe-4S] cluster as a cofactor. Requires FMN as cofactor. The cofactor is Mg(2+).

It localises to the cytoplasm. It carries out the reaction (R)-2-hydroxyglutaryl-CoA = (2E)-glutaconyl-CoA + H2O. It functions in the pathway amino-acid degradation; L-glutamate degradation via hydroxyglutarate pathway; crotonoyl-CoA from L-glutamate: step 4/5. Its activity is regulated as follows. Activated by the HgdC. Reversibly inactivated by oxidants such as 2-nitrophenol, 3-nitrophenol, 4-nitrophenol, 4-nitrobenzoate, carbonyl cyanide 4-(trifluoromethoxy)phenylhydrazone (FCCP) and chloramphenicol. Irreversibly inactivated by oxidants such as hydroxylamine and nitrite. Its function is as follows. Involved in the fermentation of L-glutamate via the hydroxyglutarate pathway. Catalyzes the reversible syn-elimination of water from (R)-2-hydroxyglutaryl-CoA to yield (E)-glutaconyl-CoA. The dehydration mechanism involves a transient one electron reduction of the thioester from (R)-2-hydroxyglutaryl-CoA, generating a ketyl radical. Prior to (E)-glutaconyl-CoA formation, the ketyl radical is subsequently reoxidized by electron transfer back to the HgdA-HgdB complex (CompD) to avoid change in oxidation state of the substrate. The appropriate redox state of dehydratase HgdA-HgdB complex (CompD) is maintained by HgdC (CompA) via hydrolysis of ATP and ATP-dependent electron transfer. Since the electron is recycled, the dehydratase is able to perform several turnovers with only catalytic amounts of ATP and substoichiometric amounts of HgdC (CompA). The protein is (R)-2-hydroxyglutaryl-CoA dehydratase, subunit alpha of Acidaminococcus fermentans (strain ATCC 25085 / DSM 20731 / CCUG 9996 / CIP 106432 / VR4).